We begin with the raw amino-acid sequence, 440 residues long: Diels-Alderase mycB (440 aa).

The N-terminal stretch at 1-18 is a signal peptide; that stretch reads MGYLVKLACGLLLPLATA. Asn80, Asn155, and Asn332 each carry an N-linked (GlcNAc...) asparagine glycan.

The protein belongs to the Diels-Alderase family.

It catalyses the reaction (5S)-5-(2-methylpropyl)-3-[(2E,6R,8E,10E,12E)-6,8,10,12-tetramethyltetradeca-2,8,10,12-tetraenoyl]-2,5-dihydro-1H-pyrrol-2-one = (5S)-3-[(1S,2R,4aR,6R,8aS)-2-(but-2-en-2-yl)-3,4a,6-trimethyl-1,2,4a,5,6,7,8,8a-octahydronaphthalene-1-carbonyl]-5-(2-methylpropyl)-2,5-dihydro-1H-pyrrol-2-one. The catalysed reaction is (5Z)-5-(2-methylpropylidene)-3-[(2E,6R,8E,10E,12E)-6,8,10,12-tetramethyltetradeca-2,8,10,12-tetraenoyl]-2,5-dihydro-1H-pyrrol-2-one = myceliothermophin E. The protein operates within mycotoxin biosynthesis. Diels-Alderase; part of the gene cluster that mediates the biosynthesis of myceliothermophins, mycotoxins that contain a trans-fused decalin ring system connected to a conjugated 3-pyrrolin-2-one moiety and that have potential anti-tumor properties. The polyketide synthase module (PKS) of the PKS-NRPS mycA is responsible for the synthesis of the octaketide backbone. The downstream nonribosomal peptide synthetase (NRPS) module then amidates the carboxyl end of the octaketide with a leucine. A reductase-like domain (R) at the C-terminus catalyzes the reductive release of the polyketide-amino acid intermediate. Because mycA lacks a designated enoylreductase (ER) domain, the required activity is provided the enoyl reductase mycC. Following mycA-catalyzed construction and release of aminoacyl polyketide aldehyde, Knoevenagel condensation yields the expected ketone. This C18 keto acyclic precursor is the substrate of the Diels-Alderase mycB, that catalyzes the Diels-Alder cycloaddition to produce myceliothermophin E. A yet unknown oxygenase involved in the production of myceliothermophin A, via substitution with a hydroxyl group at the C21, has still to be identified. In Thermothelomyces thermophilus (strain ATCC 42464 / BCRC 31852 / DSM 1799) (Sporotrichum thermophile), this protein is Diels-Alderase mycB.